The chain runs to 122 residues: Large ribosomal subunit protein uL14 (122 aa).

It belongs to the universal ribosomal protein uL14 family. In terms of assembly, part of the 50S ribosomal subunit. Forms a cluster with proteins L3 and L19. In the 70S ribosome, L14 and L19 interact and together make contacts with the 16S rRNA in bridges B5 and B8.

Functionally, binds to 23S rRNA. Forms part of two intersubunit bridges in the 70S ribosome. In Janthinobacterium sp. (strain Marseille) (Minibacterium massiliensis), this protein is Large ribosomal subunit protein uL14.